Reading from the N-terminus, the 590-residue chain is MERGPQMANRIEGKAVDKTSIKHFIKLIRAAKPRYLFFIIGILAGIVGTLIQLQVPKMVQPLVNSFGHGVNGGKVALVIALYIGSAAVSAIAAIVLGIFGESVVKNLRTRVWDKMIHLPVKYFDEVKTGEMSSRLANDTTQVKNLIANSIPQAFTSILLLVGSIVFMLQMQWRLTLAMIIAVPVVMLIMFPIMTFGQKIGRTRQDSLANFQGIASESLSEIRLVKSSNAEKQASKKAENDVNALYKIGVKEAIFDGLMSPVMMLSMMLMIFGLLAYGIYLISTGVMSLGTLLGMMMYLMNLIGAVPTVATFFTELAKASGSTGRLTELLDEEQEVLHQGESLDLEGKTLSARHVDFAYDDSEQILRDISFEAQPNSIIAFAGPSGGGKSTIFSLLERFYQPTAGEITIDGQPIDNISLENWRSQIGFVSQDSAIMAGTIRENLTYGLEGDYTDEDLWQVLDLAFARSFVENMPDQLNTEVGERGVKISGGQRQRLAIARAFLRNPKILMLDEATASLDSESESMVQKALDSLMKGRTTLVIAHRLSTIVDADKIYFIEKGQITGSGKHNELVATHPLYAKYVSEQLTVGQ.

Transmembrane regions (helical) follow at residues 35 to 55, 79 to 99, 150 to 170, 176 to 196, 261 to 281, and 292 to 312; these read YLFF…QLQV, IALY…LGIF, IPQA…MLQM, LAMI…MTFG, VMML…IYLI, and LGMM…ATFF. One can recognise an ABC transmembrane type-1 domain in the interval 38 to 317; the sequence is FIIGILAGIV…VATFFTELAK (280 aa). An ABC transporter domain is found at 349–584; it reads LSARHVDFAY…HPLYAKYVSE (236 aa). Position 382–389 (382–389) interacts with ATP; it reads GPSGGGKS.

Belongs to the ABC transporter superfamily. Multidrug exporter LmrA (TC 3.A.1.117.1) family. Homodimer.

The protein localises to the cell membrane. The enzyme catalyses ATP + H2O + xenobioticSide 1 = ADP + phosphate + xenobioticSide 2.. In terms of biological role, efflux transporter for a variety of amphiphilic cationic compounds, including antibiotics. The protein is Multidrug resistance ABC transporter ATP-binding and permease protein (lmrA) of Lactococcus lactis subsp. lactis (strain IL1403) (Streptococcus lactis).